A 461-amino-acid polypeptide reads, in one-letter code: L-seryl-tRNA(Sec) selenium transferase (461 aa).

Residue Lys-294 is modified to N6-(pyridoxal phosphate)lysine.

The protein belongs to the SelA family. It depends on pyridoxal 5'-phosphate as a cofactor.

It is found in the cytoplasm. The enzyme catalyses L-seryl-tRNA(Sec) + selenophosphate + H(+) = L-selenocysteinyl-tRNA(Sec) + phosphate. It participates in aminoacyl-tRNA biosynthesis; selenocysteinyl-tRNA(Sec) biosynthesis; selenocysteinyl-tRNA(Sec) from L-seryl-tRNA(Sec) (bacterial route): step 1/1. Functionally, converts seryl-tRNA(Sec) to selenocysteinyl-tRNA(Sec) required for selenoprotein biosynthesis. This chain is L-seryl-tRNA(Sec) selenium transferase, found in Haemophilus influenzae (strain 86-028NP).